A 300-amino-acid chain; its full sequence is tRNA dimethylallyltransferase (300 aa).

11–18 provides a ligand contact to ATP; the sequence is GPTAVGKS. 13–18 is a substrate binding site; sequence TAVGKS. The interaction with substrate tRNA stretch occupies residues 35–38; it reads DSIQ.

This sequence belongs to the IPP transferase family. Monomer. The cofactor is Mg(2+).

It carries out the reaction adenosine(37) in tRNA + dimethylallyl diphosphate = N(6)-dimethylallyladenosine(37) in tRNA + diphosphate. Its function is as follows. Catalyzes the transfer of a dimethylallyl group onto the adenine at position 37 in tRNAs that read codons beginning with uridine, leading to the formation of N6-(dimethylallyl)adenosine (i(6)A). The chain is tRNA dimethylallyltransferase from Borreliella afzelii (strain PKo) (Borrelia afzelii).